The chain runs to 329 residues: GTPase Obg (329 aa).

Residues 1 to 159 (MQFIDEAKIF…MWVWLHLKLL (159 aa)) enclose the Obg domain. In terms of domain architecture, OBG-type G spans 160 to 327 (SDVGLVGLPN…LLANILSELQ (168 aa)). GTP contacts are provided by residues 166–173 (GLPNAGKS), 191–195 (FTTLT), 212–215 (DIPG), 279–282 (TKTD), and 308–310 (SSY). The Mg(2+) site is built by Ser173 and Thr193.

This sequence belongs to the TRAFAC class OBG-HflX-like GTPase superfamily. OBG GTPase family. As to quaternary structure, monomer. It depends on Mg(2+) as a cofactor.

It is found in the cytoplasm. Its function is as follows. An essential GTPase which binds GTP, GDP and possibly (p)ppGpp with moderate affinity, with high nucleotide exchange rates and a fairly low GTP hydrolysis rate. Plays a role in control of the cell cycle, stress response, ribosome biogenesis and in those bacteria that undergo differentiation, in morphogenesis control. The chain is GTPase Obg from Orientia tsutsugamushi (strain Ikeda) (Rickettsia tsutsugamushi).